The following is a 490-amino-acid chain: MARFELQKLYIDGAYSDAGSDATFEAINPANGEVLAHVQRATKEDVERAVVSAEKGQKIWAAMTAMERSRILRRAVDILRERNDELAALETLDTGKAFSETKYVDIVTGADVLEYYAGLVPAIEGEQIPLRDTSFVYTRREPLGVVAGIGAWNYPIQIALWKSAPALAAGNAMIFKPSEVTSLTTLKLAEIYTEAGVPNGVFNVLTGSGREVGTWLTEHPRIEKISFTGGTDTGKKVMASASASSLKDVTMELGGKSPLIICDDADLDRAADTAMMANFYSSGQVCTNGTRVFVPSHLKAAFEAKIVERVARIRVGNPEDENTNFGPLVSFPHMESVLGYIAKGKEEGARVLCGGERLTDGEFAKGAFVAPTVFTDCTDDMTIVREEIFGPVMAILSYETEEEVIRRANDTDFGLAAGIVTRDLNRAHRVIHQLEAGICWINAWGESDAKMPVGGYKQSGVGRENGISSLNNFTRIKSVQVELGDYVSVF.

K(+)-binding residues include isoleucine 27 and aspartate 93. 150–152 contacts NAD(+); that stretch reads GAW. Lysine 162 acts as the Charge relay system in catalysis. 176-179 lines the NAD(+) pocket; it reads KPSE. Valine 180 contributes to the K(+) binding site. An NAD(+)-binding site is contributed by 230–233; the sequence is GTDT. Leucine 246 serves as a coordination point for K(+). The active-site Proton acceptor is the glutamate 252. Glycine 254, cysteine 286, and glutamate 387 together coordinate NAD(+). Cysteine 286 acts as the Nucleophile in catalysis. Cysteine 286 is subject to Cysteine sulfenic acid (-SOH). K(+)-binding residues include lysine 457 and glycine 460. Residue glutamate 464 is the Charge relay system of the active site.

Belongs to the aldehyde dehydrogenase family. In terms of assembly, dimer of dimers. K(+) serves as cofactor.

The enzyme catalyses betaine aldehyde + NAD(+) + H2O = glycine betaine + NADH + 2 H(+). It participates in amine and polyamine biosynthesis; betaine biosynthesis via choline pathway; betaine from betaine aldehyde: step 1/1. In terms of biological role, involved in the biosynthesis of the osmoprotectant glycine betaine. Catalyzes the irreversible oxidation of betaine aldehyde to the corresponding acid. The protein is Betaine aldehyde dehydrogenase of Pseudomonas fluorescens (strain Pf0-1).